The primary structure comprises 194 residues: uncharacterized protein (194 aa).

2 consecutive CBS domains span residues 13–72 (MSFP…PKDV) and 78–133 (MSKK…LLEI). Residues 159-192 (YINGICENCGYQGRVRLYQGRYLCDECIEEFEEK) enclose the ACP-type MB domain. Fe cation-binding residues include cysteine 164, cysteine 167, cysteine 182, and cysteine 185. Residues cysteine 164, cysteine 167, cysteine 182, and cysteine 185 each contribute to the Zn(2+) site.

This is an uncharacterized protein from Methanocaldococcus jannaschii (strain ATCC 43067 / DSM 2661 / JAL-1 / JCM 10045 / NBRC 100440) (Methanococcus jannaschii).